The sequence spans 473 residues: Photosystem II CP43 reaction center protein (473 aa).

Residues 1–14 constitute a propeptide that is removed on maturation; it reads MKTLYSLRRFYHVE. The residue at position 15 (Thr-15) is an N-acetylthreonine. Position 15 is a phosphothreonine (Thr-15). Helical transmembrane passes span 69-93, 134-155, 178-200, 255-275, and 291-312; these read LFEVAHFTPEKPMYEQGLILLPHLA, LIGPETLEESFPFFGYVWKDKN, KACYFGGVYDTWAPGGGDVRIIT, KPWAWARRAFVWSGEAYLSYS, and WFNNTAYPSEFYGPTGPEASQA. Glu-367 lines the [CaMn4O5] cluster pocket. Residues 447–471 traverse the membrane as a helical segment; sequence RARAAAAGFEKGIERETEPVLFMKP.

It belongs to the PsbB/PsbC family. PsbC subfamily. As to quaternary structure, PSII is composed of 1 copy each of membrane proteins PsbA, PsbB, PsbC, PsbD, PsbE, PsbF, PsbH, PsbI, PsbJ, PsbK, PsbL, PsbM, PsbT, PsbX, PsbY, PsbZ, Psb30/Ycf12, at least 3 peripheral proteins of the oxygen-evolving complex and a large number of cofactors. It forms dimeric complexes. Binds multiple chlorophylls and provides some of the ligands for the Ca-4Mn-5O cluster of the oxygen-evolving complex. It may also provide a ligand for a Cl- that is required for oxygen evolution. PSII binds additional chlorophylls, carotenoids and specific lipids. is required as a cofactor.

The protein resides in the plastid. Its subcellular location is the chloroplast thylakoid membrane. Its function is as follows. One of the components of the core complex of photosystem II (PSII). It binds chlorophyll and helps catalyze the primary light-induced photochemical processes of PSII. PSII is a light-driven water:plastoquinone oxidoreductase, using light energy to abstract electrons from H(2)O, generating O(2) and a proton gradient subsequently used for ATP formation. This Mesostigma viride (Green alga) protein is Photosystem II CP43 reaction center protein.